Consider the following 108-residue polypeptide: Circadian clock oscillator protein KaiB (108 aa).

It belongs to the KaiB family. In terms of assembly, homodimer, interacts with KaiC. The KaiABC complex composition changes during the circadian cycle to control KaiC phosphorylation. Complexes KaiC(6), KaiA(2-4):KaiC(6), KaiB(6):KaiC(6) and KaiC(6):KaiB(6):KaiA(12) are among the most important forms, many form cooperatively. Undergoes a major conformational rearrangment; in the free state forms homotetramers as a dimer of dimers. When bound to the CI domain of KaiC switches to a monomeric thioredoxin-fold (KaiB(fs)). KaiB(fs) binds CikA, leading it to dephosphorylate phospho-RpaA.

In terms of biological role, key component of the KaiABC oscillator complex, which constitutes the main circadian regulator in cyanobacteria. Complex composition changes during the circadian cycle to control KaiC phosphorylation. KaiA stimulates KaiC autophosphorylation, while KaiB sequesters KaiA, leading to KaiC autodephosphorylation. Phospho-Ser-431 KaiC accumulation triggers binding of KaiB to form the KaiB(6):KaiC(6) complex, leading to changes in output regulators CikA and SasA. KaiB switches to a thioredoxin-like fold (KaiB(fs)) when bound to KaiC. KaiB(6):KaiC(6) formation exposes a site for KaiA binding that sequesters KaiA from KaiC, making the KaiC(6):KaiB(6):KaiA(12) complex that results in KaiC autodephosphorylation. Functionally, a metamorphic protein which reversibly switches between an inactive tetrameric fold and a rare, thioredoxin-like monomeric fold (KaiB(fs)). KaiB(fs) binds phospho-KaiC, KaiA and CikA. KaiA and CikA compete for binding to KaiB(fs), and KaiB(fs) and SasA compete for binding to KaiC, thus the clock oscillator and output signal pathway are tightly coupled. This is Circadian clock oscillator protein KaiB from Nostoc sp. (strain PCC 7120 / SAG 25.82 / UTEX 2576).